A 340-amino-acid polypeptide reads, in one-letter code: Ketol-acid reductoisomerase (NADP(+)) (340 aa).

A KARI N-terminal Rossmann domain is found at 3-183 (LPIYYDKDCD…GGGRTGIIHT (181 aa)). NADP(+) contacts are provided by residues 26–29 (FGSQ), Ser-54, and 84–87 (DEIQ). His-109 is a catalytic residue. Gly-135 contributes to the NADP(+) binding site. The KARI C-terminal knotted domain maps to 184 to 329 (TFKDETETDL…KRLRAMMPWI (146 aa)). Positions 192, 196, 228, and 232 each coordinate Mg(2+). Ser-253 is a binding site for substrate.

It belongs to the ketol-acid reductoisomerase family. It depends on Mg(2+) as a cofactor.

The enzyme catalyses (2R)-2,3-dihydroxy-3-methylbutanoate + NADP(+) = (2S)-2-acetolactate + NADPH + H(+). It catalyses the reaction (2R,3R)-2,3-dihydroxy-3-methylpentanoate + NADP(+) = (S)-2-ethyl-2-hydroxy-3-oxobutanoate + NADPH + H(+). It participates in amino-acid biosynthesis; L-isoleucine biosynthesis; L-isoleucine from 2-oxobutanoate: step 2/4. The protein operates within amino-acid biosynthesis; L-valine biosynthesis; L-valine from pyruvate: step 2/4. Its function is as follows. Involved in the biosynthesis of branched-chain amino acids (BCAA). Catalyzes an alkyl-migration followed by a ketol-acid reduction of (S)-2-acetolactate (S2AL) to yield (R)-2,3-dihydroxy-isovalerate. In the isomerase reaction, S2AL is rearranged via a Mg-dependent methyl migration to produce 3-hydroxy-3-methyl-2-ketobutyrate (HMKB). In the reductase reaction, this 2-ketoacid undergoes a metal-dependent reduction by NADPH to yield (R)-2,3-dihydroxy-isovalerate. This is Ketol-acid reductoisomerase (NADP(+)) from Nitratiruptor sp. (strain SB155-2).